The sequence spans 398 residues: Tryptophan synthase beta chain (398 aa).

N6-(pyridoxal phosphate)lysine is present on Lys-87.

It belongs to the TrpB family. As to quaternary structure, tetramer of two alpha and two beta chains. It depends on pyridoxal 5'-phosphate as a cofactor.

It carries out the reaction (1S,2R)-1-C-(indol-3-yl)glycerol 3-phosphate + L-serine = D-glyceraldehyde 3-phosphate + L-tryptophan + H2O. Its pathway is amino-acid biosynthesis; L-tryptophan biosynthesis; L-tryptophan from chorismate: step 5/5. The beta subunit is responsible for the synthesis of L-tryptophan from indole and L-serine. This Blochmanniella floridana protein is Tryptophan synthase beta chain.